We begin with the raw amino-acid sequence, 197 residues long: Nucleoid occlusion factor SlmA (197 aa).

One can recognise an HTH tetR-type domain in the interval 7-67 (ISRREHILQC…GLIEFIEDSL (61 aa)). Positions 30-49 (TTAKLAAEVGVSEAALYRHF) form a DNA-binding region, H-T-H motif.

It belongs to the nucleoid occlusion factor SlmA family. As to quaternary structure, homodimer. Interacts with FtsZ.

Its subcellular location is the cytoplasm. It is found in the nucleoid. Its function is as follows. Required for nucleoid occlusion (NO) phenomenon, which prevents Z-ring formation and cell division over the nucleoid. Acts as a DNA-associated cell division inhibitor that binds simultaneously chromosomal DNA and FtsZ, and disrupts the assembly of FtsZ polymers. SlmA-DNA-binding sequences (SBS) are dispersed on non-Ter regions of the chromosome, preventing FtsZ polymerization at these regions. The chain is Nucleoid occlusion factor SlmA from Shewanella amazonensis (strain ATCC BAA-1098 / SB2B).